The following is a 92-amino-acid chain: Large ribosomal subunit protein eL43 (92 aa).

The Zn(2+) site is built by C39, C42, C57, and C60. The C4-type zinc-finger motif lies at 39-60 (CSFCGKTKMKRKAVGIWHCGSC).

This sequence belongs to the eukaryotic ribosomal protein eL43 family. In terms of assembly, component of the large ribosomal subunit.

It localises to the cytoplasm. Component of the large ribosomal subunit. The ribosome is a large ribonucleoprotein complex responsible for the synthesis of proteins in the cell. The sequence is that of Large ribosomal subunit protein eL43 (RPL37A) from Gallus gallus (Chicken).